We begin with the raw amino-acid sequence, 108 residues long: UPF0145 protein THA_1434 (108 aa).

Belongs to the UPF0145 family.

This Thermosipho africanus (strain TCF52B) protein is UPF0145 protein THA_1434.